A 202-amino-acid chain; its full sequence is Small ribosomal subunit protein uS4c (202 aa).

An S4 RNA-binding domain is found at 90 to 154 (MRLDNIIFRL…SQSIITKNLN (65 aa)).

The protein belongs to the universal ribosomal protein uS4 family. In terms of assembly, part of the 30S ribosomal subunit. Contacts protein S5. The interaction surface between S4 and S5 is involved in control of translational fidelity.

The protein resides in the plastid. It localises to the chloroplast. In terms of biological role, one of the primary rRNA binding proteins, it binds directly to 16S rRNA where it nucleates assembly of the body of the 30S subunit. With S5 and S12 plays an important role in translational accuracy. The protein is Small ribosomal subunit protein uS4c (rps4) of Ricciocarpos natans (Liverwort).